The primary structure comprises 316 residues: Cyclin-dependent kinase inhibitor 1C (316 aa).

Arginine 107 bears the Omega-N-methylarginine mark. Positions 124–153 are disordered; it reads ESLDGLEEAPEQLPSVPVPAPASTPPPVPV. Residues 139–153 show a composition bias toward pro residues; it reads VPVPAPASTPPPVPV. 9 tandem repeats follow at residues 156–159, 160–163, 180–183, 184–187, 188–191, 198–201, 202–205, 206–209, and 210–213. Residues 156-213 form a 9 X 4 AA repeats of P-A-P-A region; the sequence is PAPAPAPAPVAAPVAAPVAVAVLAPAPAPAPAPAPAPAPVAAPAPAPAPAPAPAPAPA. A compositionally biased stretch (pro residues) spans 181 to 217; the sequence is APAPAPAPAPAPAPVAAPAPAPAPAPAPAPAPAPAPD. A disordered region spans residues 181–260; it reads APAPAPAPAP…AAGTAAASAN (80 aa). Residues 223–233 show a composition bias toward polar residues; sequence SAEQGANQGQR. Low complexity predominate over residues 251–260; sequence AAGTAAASAN. Serine 268 bears the Phosphoserine mark. Positions 278–281 match the Nuclear localization signal motif; that stretch reads KRKR. Positions 278–316 are disordered; the sequence is KRKRSAPEKSSGDVPAPCPSPSAAPGVGSVEQTPRKRLR.

Belongs to the CDI family. In terms of assembly, interacts with PCNA. Expressed in the heart, brain, lung, skeletal muscle, kidney, pancreas and testis. Expressed in the eye. High levels are seen in the placenta while low levels are seen in the liver.

The protein resides in the nucleus. Potent tight-binding inhibitor of several G1 cyclin/CDK complexes (cyclin E-CDK2, cyclin D2-CDK4, and cyclin A-CDK2) and, to lesser extent, of the mitotic cyclin B-CDC2. Negative regulator of cell proliferation. May play a role in maintenance of the non-proliferative state throughout life. The sequence is that of Cyclin-dependent kinase inhibitor 1C (CDKN1C) from Homo sapiens (Human).